Consider the following 282-residue polypeptide: Armadillo repeat-containing protein 1 (282 aa).

Met-1 is modified (N-acetylmethionine). An ARM repeat occupies 39–81; that stretch reads GCLPGLILSMDHPNPPVVHSALLALRYLAECRANREKMKGELG. Phosphothreonine is present on Thr-137. Phosphoserine is present on residues Ser-189, Ser-246, Ser-260, and Ser-267. Residues 239 to 261 form a disordered region; that stretch reads DYLPEDESPTKEQDKAVSRVGSH. A compositionally biased stretch (basic and acidic residues) spans 246-255; that stretch reads SPTKEQDKAV.

Interacts with mitochondrial contact site and cristae organizing system (MICOS) complex components IMMT/MIC60 and MICOS10/MIC10. Interacts with mitochondrial outer membrane sorting assembly machinery (SAM) complex components SAMM50 and MTX1.

The protein resides in the cytoplasm. Its subcellular location is the mitochondrion. It is found in the mitochondrion outer membrane. Its function is as follows. In association with mitochondrial contact site and cristae organizing system (MICOS) complex components and mitochondrial outer membrane sorting assembly machinery (SAM) complex components may regulate mitochondrial dynamics playing a role in determining mitochondrial length, distribution and motility. This is Armadillo repeat-containing protein 1 (ARMC1) from Pongo abelii (Sumatran orangutan).